Reading from the N-terminus, the 77-residue chain is Large ribosomal subunit protein bL28 (77 aa).

The interval 1 to 21 (MARVCKVTGKRPMTGNNVSHA) is disordered.

It belongs to the bacterial ribosomal protein bL28 family.

In Chromobacterium violaceum (strain ATCC 12472 / DSM 30191 / JCM 1249 / CCUG 213 / NBRC 12614 / NCIMB 9131 / NCTC 9757 / MK), this protein is Large ribosomal subunit protein bL28.